The primary structure comprises 362 residues: Molybdenum import ATP-binding protein ModC (362 aa).

Residues 2 to 236 form the ABC transporter domain; that stretch reads ASPIEVRLHM…LDLPLAMGGD (235 aa). 34 to 41 is a binding site for ATP; sequence GPSGSGKT. The region spanning 297–362 is the Mop domain; the sequence is QSSILNRLPV…AQIKAVAVLA (66 aa).

Belongs to the ABC transporter superfamily. Molybdate importer (TC 3.A.1.8) family. The complex is composed of two ATP-binding proteins (ModC), two transmembrane proteins (ModB) and a solute-binding protein (ModA).

It is found in the cell inner membrane. The enzyme catalyses molybdate(out) + ATP + H2O = molybdate(in) + ADP + phosphate + H(+). Its function is as follows. Part of the ABC transporter complex ModABC involved in molybdenum import. Responsible for energy coupling to the transport system. The polypeptide is Molybdenum import ATP-binding protein ModC (Pseudomonas savastanoi pv. phaseolicola (strain 1448A / Race 6) (Pseudomonas syringae pv. phaseolicola (strain 1448A / Race 6))).